A 522-amino-acid polypeptide reads, in one-letter code: Leucine-rich repeat transmembrane neuronal protein 1 (522 aa).

Positions 1 to 34 (MDFLLLGLCLYWLLRRPSGVVLCLLGACFQMLPA) are cleaved as a signal peptide. Positions 35–63 (APSGCPQLCRCEGRLLYCEALNPTEAPHN) constitute an LRRNT domain. Topologically, residues 35–427 (APSGCPQLCR…HAENAVQIHK (393 aa)) are extracellular. An N-linked (GlcNAc...) asparagine glycan is attached at Asn-63. LRR repeat units lie at residues 64–87 (LSGL…QFTG), 89–111 (MQLT…AFQK), 112–135 (LRRV…TFRP), 137–159 (PNLR…LFHG), 161–183 (RKLT…IFQD), 184–207 (CRSL…SFAG), 209–231 (FKLT…HFPR), 233–255 (ISLH…LDWV), 256–278 (WNLK…VFET), and 279–302 (VPHL…ILNS). Asn-130 carries N-linked (GlcNAc...) asparagine glycosylation. The LRRCT domain maps to 314-365 (NLWDCGRNVCALASWLSNFQGRYDGNLQCASPEYAQGEDVLDAVYAFHLCED). The N-linked (GlcNAc...) asparagine glycan is linked to Asn-380. The tract at residues 382–401 (SDLGPPASSATTLADGGEGQ) is disordered. The chain crosses the membrane as a helical span at residues 428–448 (VVTGTMALIFSFLIVVLVLYV). Over 449–522 (SWKCFPASLR…HQQPARECEV (74 aa)) the chain is Cytoplasmic.

Belongs to the LRRTM family.

The protein localises to the cell membrane. It is found in the postsynaptic cell membrane. Its function is as follows. Exhibits strong synaptogenic activity, restricted to excitatory presynaptic differentiation, acting at both pre- and postsynaptic level. The polypeptide is Leucine-rich repeat transmembrane neuronal protein 1 (LRRTM1) (Pongo abelii (Sumatran orangutan)).